The following is a 483-amino-acid chain: Proline--tRNA ligase (483 aa).

It belongs to the class-II aminoacyl-tRNA synthetase family. ProS type 3 subfamily. As to quaternary structure, homodimer.

The protein localises to the cytoplasm. The catalysed reaction is tRNA(Pro) + L-proline + ATP = L-prolyl-tRNA(Pro) + AMP + diphosphate. In terms of biological role, catalyzes the attachment of proline to tRNA(Pro) in a two-step reaction: proline is first activated by ATP to form Pro-AMP and then transferred to the acceptor end of tRNA(Pro). The polypeptide is Proline--tRNA ligase (Sulfurisphaera tokodaii (strain DSM 16993 / JCM 10545 / NBRC 100140 / 7) (Sulfolobus tokodaii)).